Consider the following 117-residue polypeptide: Large ribosomal subunit protein eL8 (117 aa).

Belongs to the eukaryotic ribosomal protein eL8 family. In terms of assembly, part of the 50S ribosomal subunit. Probably part of the RNase P complex.

It localises to the cytoplasm. Its function is as follows. Multifunctional RNA-binding protein that recognizes the K-turn motif in ribosomal RNA, the RNA component of RNase P, box H/ACA, box C/D and box C'/D' sRNAs. This is Large ribosomal subunit protein eL8 from Methanococcus aeolicus (strain ATCC BAA-1280 / DSM 17508 / OCM 812 / Nankai-3).